Here is a 266-residue protein sequence, read N- to C-terminus: MAVVTMRELLDAGVHFGHQTRRWNPKMRRFIFTDRNGIYIIDLQQTLTYIDEAYEFVKETVAHGGTILYVGTKKQAQESVKNEAERVGMPYVNHRWLGGMLTNFQTVSKRLHRMKELQAMDAAENGYEGRTKKEVLMLTRERTKLERVLGGIADMTKTPSAMWVVDTNKEHIAVSEAHKLNIPVVAILDTNCDPDVVNFPVPGNDDAIRSIDVLTKVISHAVIEGKKAREERALAAAKEAAGDANKTEVAAKVEATEEVAAEAEAK.

It belongs to the universal ribosomal protein uS2 family.

The polypeptide is Small ribosomal subunit protein uS2 (Corynebacterium diphtheriae (strain ATCC 700971 / NCTC 13129 / Biotype gravis)).